Reading from the N-terminus, the 176-residue chain is MTTLYQTESKQTLTDPATIKDFLKSHGIWFEQWETPAQLTQEASQADILAAYADVLDPFMAANGYQSADVVNIHSGIENYQAIREKFLAEHTHSEDEVRFFVAGQGLFWFNLDGTAVFNVCCEAGDLISVPQGTKHWFDAGPVPNVKAIRIFSDTAGWTPHYTGSQVEQQYRAITL.

The Fe(2+) site is built by His91, His93, Glu97, and His136. His91, His93, Glu97, and His136 together coordinate Ni(2+).

Belongs to the acireductone dioxygenase (ARD) family. As to quaternary structure, monomer. Fe(2+) serves as cofactor. Requires Ni(2+) as cofactor.

The enzyme catalyses 1,2-dihydroxy-5-(methylsulfanyl)pent-1-en-3-one + O2 = 3-(methylsulfanyl)propanoate + CO + formate + 2 H(+). It carries out the reaction 1,2-dihydroxy-5-(methylsulfanyl)pent-1-en-3-one + O2 = 4-methylsulfanyl-2-oxobutanoate + formate + 2 H(+). The protein operates within amino-acid biosynthesis; L-methionine biosynthesis via salvage pathway; L-methionine from S-methyl-5-thio-alpha-D-ribose 1-phosphate: step 5/6. Catalyzes 2 different reactions between oxygen and the acireductone 1,2-dihydroxy-3-keto-5-methylthiopentene (DHK-MTPene) depending upon the metal bound in the active site. Fe-containing acireductone dioxygenase (Fe-ARD) produces formate and 2-keto-4-methylthiobutyrate (KMTB), the alpha-ketoacid precursor of methionine in the methionine recycle pathway. Ni-containing acireductone dioxygenase (Ni-ARD) produces methylthiopropionate, carbon monoxide and formate, and does not lie on the methionine recycle pathway. This is Acireductone dioxygenase from Picosynechococcus sp. (strain ATCC 27264 / PCC 7002 / PR-6) (Agmenellum quadruplicatum).